The sequence spans 391 residues: Pectin acetylesterase 7 (391 aa).

An N-terminal signal peptide occupies residues 1 to 23 (MGRLKQCWSSLLVLAVLVIGTGA). Active-site charge relay system residues include S171, D267, and H334.

The protein belongs to the pectinacetylesterase family.

It is found in the secreted. The protein resides in the cell wall. In terms of biological role, hydrolyzes acetyl esters in homogalacturonan regions of pectin. In type I primary cell wall, galacturonic acid residues of pectin can be acetylated at the O-2 and O-3 positions. Decreasing the degree of acetylation of pectin gels in vitro alters their physical properties. The sequence is that of Pectin acetylesterase 7 from Arabidopsis thaliana (Mouse-ear cress).